A 391-amino-acid chain; its full sequence is tRNA-specific 2-thiouridylase MnmA (391 aa).

ATP-binding positions include 35-42 and leucine 61; that span reads GLSGGVDS. Cysteine 122 acts as the Nucleophile in catalysis. Residues cysteine 122 and cysteine 221 are joined by a disulfide bond. Glycine 147 serves as a coordination point for ATP. The tract at residues 171 to 173 is interaction with tRNA; that stretch reads KDQ. The active-site Cysteine persulfide intermediate is cysteine 221. The segment at 328 to 329 is interaction with tRNA; the sequence is RY.

Belongs to the MnmA/TRMU family.

It is found in the cytoplasm. The enzyme catalyses S-sulfanyl-L-cysteinyl-[protein] + uridine(34) in tRNA + AH2 + ATP = 2-thiouridine(34) in tRNA + L-cysteinyl-[protein] + A + AMP + diphosphate + H(+). Catalyzes the 2-thiolation of uridine at the wobble position (U34) of tRNA, leading to the formation of s(2)U34. The chain is tRNA-specific 2-thiouridylase MnmA from Synechococcus sp. (strain CC9311).